A 460-amino-acid polypeptide reads, in one-letter code: Bifunctional protein GlmU (460 aa).

The segment at 1 to 232 is pyrophosphorylase; sequence MAISAALILA…PDEIMGVNDR (232 aa). Residues 9–12, lysine 23, glutamine 75, and 80–81 each bind UDP-N-acetyl-alpha-D-glucosamine; these read LAAG and GT. Aspartate 105 provides a ligand contact to Mg(2+). The UDP-N-acetyl-alpha-D-glucosamine site is built by glycine 142, glutamate 157, asparagine 172, and asparagine 230. A Mg(2+)-binding site is contributed by asparagine 230. The segment at 233–253 is linker; that stretch reads VQLAHAARVLRQRVNLQLMLA. Positions 254 to 460 are N-acetyltransferase; the sequence is GVTLIDPDQT…GWCLKKRDNG (207 aa). Residues arginine 336 and lysine 354 each contribute to the UDP-N-acetyl-alpha-D-glucosamine site. The active-site Proton acceptor is the histidine 366. 2 residues coordinate UDP-N-acetyl-alpha-D-glucosamine: tyrosine 369 and asparagine 380. Residues 389-390, serine 408, alanine 426, and arginine 443 each bind acetyl-CoA; that span reads NY.

The protein in the N-terminal section; belongs to the N-acetylglucosamine-1-phosphate uridyltransferase family. In the C-terminal section; belongs to the transferase hexapeptide repeat family. In terms of assembly, homotrimer. Mg(2+) serves as cofactor.

It is found in the cytoplasm. The enzyme catalyses alpha-D-glucosamine 1-phosphate + acetyl-CoA = N-acetyl-alpha-D-glucosamine 1-phosphate + CoA + H(+). The catalysed reaction is N-acetyl-alpha-D-glucosamine 1-phosphate + UTP + H(+) = UDP-N-acetyl-alpha-D-glucosamine + diphosphate. It participates in nucleotide-sugar biosynthesis; UDP-N-acetyl-alpha-D-glucosamine biosynthesis; N-acetyl-alpha-D-glucosamine 1-phosphate from alpha-D-glucosamine 6-phosphate (route II): step 2/2. It functions in the pathway nucleotide-sugar biosynthesis; UDP-N-acetyl-alpha-D-glucosamine biosynthesis; UDP-N-acetyl-alpha-D-glucosamine from N-acetyl-alpha-D-glucosamine 1-phosphate: step 1/1. Its pathway is bacterial outer membrane biogenesis; LPS lipid A biosynthesis. Its function is as follows. Catalyzes the last two sequential reactions in the de novo biosynthetic pathway for UDP-N-acetylglucosamine (UDP-GlcNAc). The C-terminal domain catalyzes the transfer of acetyl group from acetyl coenzyme A to glucosamine-1-phosphate (GlcN-1-P) to produce N-acetylglucosamine-1-phosphate (GlcNAc-1-P), which is converted into UDP-GlcNAc by the transfer of uridine 5-monophosphate (from uridine 5-triphosphate), a reaction catalyzed by the N-terminal domain. The protein is Bifunctional protein GlmU of Trichlorobacter lovleyi (strain ATCC BAA-1151 / DSM 17278 / SZ) (Geobacter lovleyi).